Here is a 367-residue protein sequence, read N- to C-terminus: Glycerol dehydrogenase (367 aa).

Residues Asp37, Gly94, Lys95, Thr116, and Ser119 each contribute to the NAD(+) site. Residue Asp121 coordinates glycerol. Residues Ser125, Leu127, and Tyr131 each contribute to the NAD(+) site. Asp171, His254, and His271 together coordinate Zn(2+). His254 provides a ligand contact to glycerol.

Belongs to the iron-containing alcohol dehydrogenase family. The cofactor is Zn(2+).

The enzyme catalyses glycerol + NAD(+) = dihydroxyacetone + NADH + H(+). The protein operates within polyol metabolism; glycerol fermentation; glycerone phosphate from glycerol (oxidative route): step 1/2. Functionally, catalyzes the NAD-dependent oxidation of glycerol to dihydroxyacetone (glycerone). Allows microorganisms to utilize glycerol as a source of carbon under anaerobic conditions. This is Glycerol dehydrogenase (gldA) from Escherichia coli O6:H1 (strain CFT073 / ATCC 700928 / UPEC).